Here is a 217-residue protein sequence, read N- to C-terminus: Transcriptional regulatory protein CutR (217 aa).

Positions R2–G116 constitute a Response regulatory domain. A 4-aspartylphosphate modification is found at D51. Positions P124 to I217 form a DNA-binding region, ompR/PhoB-type.

Its function is as follows. Member of the two-component regulatory system CutS/CutR, involved in the regulation of copper metabolism. CutR suppresses a defective melC1 gene, encoding a putative copper-transfer gene, probably by altering copper metabolism. This chain is Transcriptional regulatory protein CutR (cutR), found in Streptomyces lividans.